Reading from the N-terminus, the 222-residue chain is MNYLIHQLLNAEEINLIKKELDKCSQQDWEDGKKTAGSHASMVKNNLQLNRNTEVSKKNAQLVTKKILSSQLIKSFSLPKKIHGIMFTKSSKNMHYGRHIDNPYMSSGRSDLSFTISLTNKDFYDGGELIIETMNTEEKFKLNPGEIILYPSSYLHAVNEVNNGERLVCVGWIESYVKSTEKREYLFDLDAGARSLLSKHGRSDELDLIFKSYSNLLRDIGE.

One can recognise a Fe2OG dioxygenase domain in the interval 81–175; that stretch reads KIHGIMFTKS…RLVCVGWIES (95 aa). Fe cation contacts are provided by histidine 99, aspartate 101, and histidine 156. Arginine 166 serves as a coordination point for 2-oxoglutarate.

It depends on Fe(2+) as a cofactor. L-ascorbate is required as a cofactor.

This chain is PKHD-type hydroxylase P9301_13621, found in Prochlorococcus marinus (strain MIT 9301).